A 159-amino-acid chain; its full sequence is SsrA-binding protein (159 aa).

Belongs to the SmpB family.

It localises to the cytoplasm. Its function is as follows. Required for rescue of stalled ribosomes mediated by trans-translation. Binds to transfer-messenger RNA (tmRNA), required for stable association of tmRNA with ribosomes. tmRNA and SmpB together mimic tRNA shape, replacing the anticodon stem-loop with SmpB. tmRNA is encoded by the ssrA gene; the 2 termini fold to resemble tRNA(Ala) and it encodes a 'tag peptide', a short internal open reading frame. During trans-translation Ala-aminoacylated tmRNA acts like a tRNA, entering the A-site of stalled ribosomes, displacing the stalled mRNA. The ribosome then switches to translate the ORF on the tmRNA; the nascent peptide is terminated with the 'tag peptide' encoded by the tmRNA and targeted for degradation. The ribosome is freed to recommence translation, which seems to be the essential function of trans-translation. This chain is SsrA-binding protein, found in Mycobacteroides abscessus (strain ATCC 19977 / DSM 44196 / CCUG 20993 / CIP 104536 / JCM 13569 / NCTC 13031 / TMC 1543 / L948) (Mycobacterium abscessus).